The following is an 800-amino-acid chain: Phosphoinositide 3-kinase adapter protein 1 (800 aa).

A TIR domain is found at 8-145; that stretch reads GGYDVLILYA…AVKKAISEDS (138 aa). The segment at 10–144 is necessary and sufficient to mediate inhibition of NF-kappa-B downstream of activated TLRs; that stretch reads YDVLILYASD…EAVKKAISED (135 aa). The region spanning 185 to 321 is the DBB domain; that stretch reads VQPDHIRCGV…NIPASGLHLF (137 aa). Position 266 is a phosphotyrosine (tyrosine 266). Phosphotyrosine; by SYK is present on residues tyrosine 423, tyrosine 448, and tyrosine 463. Positions 527–548 are disordered; that stretch reads EMASRPPVPVPRPESSSPQPDN. Residues 643–663 adopt a coiled-coil conformation; that stretch reads QQENLKRLRDSITRRQMEKQK. Basic and acidic residues predominate over residues 702–713; sequence PKKELKRGDWKT. Residues 702-800 form a disordered region; it reads PKKELKRGDW…YPPPVPPRGR (99 aa). Residues 714–737 are compositionally biased toward low complexity; it reads ESTSSTTSSASNRSSTRSILSVSS. Polar residues predominate over residues 749–759; it reads SEASRSRSPIP. 2 stretches are compositionally biased toward pro residues: residues 767–777 and 791–800; these read LPLPERPPRVP and YPPPVPPRGR.

Homooligomer. Interacts (phosphorylated on tyrosine residues within YXXM motifs) with PIK3R1 (via SH2 domain); required for BCR- and TLR-mediated activation of phosphoinositide 3-kinase. Constitutively phosphorylated. Phosphorylated on tyrosine residues within the YXXM motifs by BTK and SYK. Isoform 1 and isoform 2 are phosphorylated on tyrosine residues, most likely within the YXXM motifs, via CD19 activation.

It localises to the cytoplasm. The protein resides in the cell membrane. Functionally, signaling adapter that contributes to B-cell development by linking B-cell receptor (BCR) signaling to the phosphoinositide 3-kinase (PI3K)-Akt signaling pathway. Has a complementary role to the BCR coreceptor CD19, coupling BCR and PI3K activation by providing a docking site for the PI3K subunit PIK3R1. Alternatively, links Toll-like receptor (TLR) signaling to PI3K activation, a process preventing excessive inflammatory cytokine production. Also involved in the activation of PI3K in natural killer cells. May be involved in the survival of mature B-cells via activation of REL. The polypeptide is Phosphoinositide 3-kinase adapter protein 1 (PIK3AP1) (Gallus gallus (Chicken)).